The chain runs to 302 residues: Spermidine synthase (302 aa).

N-acetylmethionine is present on Met-1. The PABS domain occupies 18–253 (EGWFRETCSL…GQIGFMLCSK (236 aa)). Gln-49 contacts S-adenosyl 3-(methylsulfanyl)propylamine. Position 79 (Tyr-79) interacts with putrescine. S-adenosyl 3-(methylsulfanyl)propylamine-binding positions include Gln-80, Asp-104, Glu-124, 155 to 156 (DG), and Asp-173. Residue Asp-173 is the Proton acceptor of the active site. Putrescine contacts are provided by residues 173 to 176 (DSSD) and Tyr-241.

This sequence belongs to the spermidine/spermine synthase family. Homodimer or homotetramer.

It catalyses the reaction S-adenosyl 3-(methylsulfanyl)propylamine + putrescine = S-methyl-5'-thioadenosine + spermidine + H(+). It participates in amine and polyamine biosynthesis; spermidine biosynthesis; spermidine from putrescine: step 1/1. Its activity is regulated as follows. The activity is thought to be regulated mainly by the availability of decarboxylated S-adenosylmethionine. In terms of biological role, catalyzes the production of spermidine from putrescine and decarboxylated S-adenosylmethionine (dcSAM). Has a strong preference for putrescine as substrate, and has very low activity towards 1,3-diaminopropane. Has extremely low activity towards spermidine. The protein is Spermidine synthase (SRM) of Homo sapiens (Human).